Here is a 518-residue protein sequence, read N- to C-terminus: Probable cytochrome P450 9h1 (518 aa).

Cysteine 462 contacts heme.

It belongs to the cytochrome P450 family. The cofactor is heme.

It is found in the endoplasmic reticulum membrane. The protein localises to the microsome membrane. Functionally, may be involved in the metabolism of insect hormones and in the breakdown of synthetic insecticides. The sequence is that of Probable cytochrome P450 9h1 (Cyp9h1) from Drosophila melanogaster (Fruit fly).